Reading from the N-terminus, the 793-residue chain is Coiled-coil domain-containing protein 175 (793 aa).

5 coiled-coil regions span residues 131–163 (EINTIKMRITRTENEIELLKKKITDLTKYNEAL), 205–377 (KRED…VLSE), 431–535 (KTVY…MLMK), 562–679 (LPQL…KYRE), and 716–745 (LVDNGEETLQDINNLTDKLRERDEKMQHVS).

The protein is Coiled-coil domain-containing protein 175 (CCDC175) of Homo sapiens (Human).